A 303-amino-acid polypeptide reads, in one-letter code: Aliphatic sulfonates import ATP-binding protein SsuB (303 aa).

The 225-residue stretch at 39-263 (LHVRQVVKRY…ERGAAGFAQL (225 aa)) folds into the ABC transporter domain. Residue 71–78 (GRSGCGKS) coordinates ATP.

The protein belongs to the ABC transporter superfamily. Aliphatic sulfonates importer (TC 3.A.1.17.2) family. As to quaternary structure, the complex is composed of two ATP-binding proteins (SsuB), two transmembrane proteins (SsuC) and a solute-binding protein (SsuA).

It localises to the cell inner membrane. It catalyses the reaction ATP + H2O + aliphatic sulfonate-[sulfonate-binding protein]Side 1 = ADP + phosphate + aliphatic sulfonateSide 2 + [sulfonate-binding protein]Side 1.. Part of the ABC transporter complex SsuABC involved in aliphatic sulfonates import. Responsible for energy coupling to the transport system. This chain is Aliphatic sulfonates import ATP-binding protein SsuB, found in Cupriavidus necator (strain ATCC 17699 / DSM 428 / KCTC 22496 / NCIMB 10442 / H16 / Stanier 337) (Ralstonia eutropha).